The primary structure comprises 246 residues: 1-(5-phosphoribosyl)-5-[(5-phosphoribosylamino)methylideneamino] imidazole-4-carboxamide isomerase (246 aa).

The active-site Proton acceptor is D7. D129 acts as the Proton donor in catalysis.

The protein belongs to the HisA/HisF family.

It localises to the cytoplasm. It catalyses the reaction 1-(5-phospho-beta-D-ribosyl)-5-[(5-phospho-beta-D-ribosylamino)methylideneamino]imidazole-4-carboxamide = 5-[(5-phospho-1-deoxy-D-ribulos-1-ylimino)methylamino]-1-(5-phospho-beta-D-ribosyl)imidazole-4-carboxamide. It functions in the pathway amino-acid biosynthesis; L-histidine biosynthesis; L-histidine from 5-phospho-alpha-D-ribose 1-diphosphate: step 4/9. This chain is 1-(5-phosphoribosyl)-5-[(5-phosphoribosylamino)methylideneamino] imidazole-4-carboxamide isomerase, found in Buchnera aphidicola subsp. Acyrthosiphon pisum (strain 5A).